Consider the following 29-residue polypeptide: Cyclotide vibi-C (29 aa).

A cross-link (cyclopeptide (Gly-Asn)) is located at residues 1 to 29; it reads GLPVCGETCAFGSCYTPGCSCSWPVCTRN. 3 cysteine pairs are disulfide-bonded: cysteine 5/cysteine 19, cysteine 9/cysteine 21, and cysteine 14/cysteine 26.

This is a cyclic peptide.

In terms of biological role, probably participates in a plant defense mechanism. The chain is Cyclotide vibi-C from Viola biflora (Yellow wood violet).